Consider the following 1766-residue polypeptide: E3 ubiquitin-protein ligase listerin (1766 aa).

Over residues 1–11 (MGGKNKQRTKG) the composition is skewed to basic residues. Residues 1–20 (MGGKNKQRTKGNVRPSSSGR) form a disordered region. HEAT repeat units lie at residues 100-138 (KGVL…KVKK), 193-231 (VLQD…SLLA), 292-329 (AEAP…TIED), 335-372 (NARK…KVPP), and 512-549 (EKTL…DEDE). The tract at residues 529-567 (KTATKPNNRKSLKVKFSDEDESERNTENGKITEVRSNSD) is disordered. Basic and acidic residues predominate over residues 551-566 (ERNTENGKITEVRSNS). 6 HEAT repeats span residues 606–644 (EQHL…ESQE), 672–710 (KDMH…KWIV), 916–953 (QVLI…NRTE), 1184–1227 (HLLP…MIRY), 1314–1355 (GIHN…YISK), and 1406–1447 (SKLM…TQEL). The RING-type zinc finger occupies 1715–1762 (CMICFSVIHGSNYSLPKKACRTCKKKFHSACLYKWFTSSNKSTCPLCR).

The protein belongs to the LTN1 family. In terms of assembly, component of the ribosome quality control complex (RQC), composed of at least the E3 ubiquitin ligase LTN1 and NEMF associated with the 60S ribosomal subunit. The complex probably also contains TCF25 as well as VCP/p97 and its ubiquitin-binding cofactors.

The protein localises to the cytoplasm. Its subcellular location is the cytosol. It catalyses the reaction S-ubiquitinyl-[E2 ubiquitin-conjugating enzyme]-L-cysteine + [acceptor protein]-L-lysine = [E2 ubiquitin-conjugating enzyme]-L-cysteine + N(6)-ubiquitinyl-[acceptor protein]-L-lysine.. It participates in protein modification; protein ubiquitination. E3 ubiquitin-protein ligase component of the ribosome quality control complex (RQC), a ribosome-associated complex that mediates ubiquitination and extraction of incompletely synthesized nascent chains for proteasomal degradation. Within the RQC complex, LTN1 is recruited to stalled 60S ribosomal subunits by NEMF and mediates ubiquitination of stalled nascent chains. Ubiquitination leads to VCP/p97 recruitment for extraction and degradation of the incomplete translation product. This chain is E3 ubiquitin-protein ligase listerin (LTN1), found in Gallus gallus (Chicken).